Consider the following 172-residue polypeptide: Small ribosomal subunit protein uS5 (172 aa).

Positions 17-80 (LREKMIAVNR…EEARRNMVKV (64 aa)) constitute an S5 DRBM domain.

This sequence belongs to the universal ribosomal protein uS5 family. As to quaternary structure, part of the 30S ribosomal subunit. Contacts proteins S4 and S8.

With S4 and S12 plays an important role in translational accuracy. In terms of biological role, located at the back of the 30S subunit body where it stabilizes the conformation of the head with respect to the body. This Verminephrobacter eiseniae (strain EF01-2) protein is Small ribosomal subunit protein uS5.